The chain runs to 207 residues: uncharacterized protein (207 aa).

Residues 177–197 (LILAIGFIIGILLPTFFILLG) form a helical membrane-spanning segment.

The protein resides in the membrane. This is an uncharacterized protein from Haemophilus influenzae (strain ATCC 51907 / DSM 11121 / KW20 / Rd).